A 206-amino-acid polypeptide reads, in one-letter code: Glycerol-3-phosphate acyltransferase (206 aa).

5 helical membrane-spanning segments follow: residues Ile14–Leu34, Ala67–Leu87, Ala91–Phe111, Leu124–Phe144, and Tyr148–Gly168.

This sequence belongs to the PlsY family. Probably interacts with PlsX.

It is found in the cell inner membrane. It catalyses the reaction an acyl phosphate + sn-glycerol 3-phosphate = a 1-acyl-sn-glycero-3-phosphate + phosphate. Its pathway is lipid metabolism; phospholipid metabolism. Its function is as follows. Catalyzes the transfer of an acyl group from acyl-phosphate (acyl-PO(4)) to glycerol-3-phosphate (G3P) to form lysophosphatidic acid (LPA). This enzyme utilizes acyl-phosphate as fatty acyl donor, but not acyl-CoA or acyl-ACP. The chain is Glycerol-3-phosphate acyltransferase from Rhizobium etli (strain CIAT 652).